The sequence spans 60 residues: Large ribosomal subunit protein bL32B (60 aa).

The span at M1–Q19 shows a compositional bias: basic residues. Positions M1–W20 are disordered.

Belongs to the bacterial ribosomal protein bL32 family.

In Saccharopolyspora erythraea (strain ATCC 11635 / DSM 40517 / JCM 4748 / NBRC 13426 / NCIMB 8594 / NRRL 2338), this protein is Large ribosomal subunit protein bL32B.